Reading from the N-terminus, the 300-residue chain is UDP-N-acetylenolpyruvoylglucosamine reductase (300 aa).

The FAD-binding PCMH-type domain occupies 30–194 (KVGGAADFFV…VGATFRLDPA (165 aa)). The active site involves Arg174. The active-site Proton donor is Ser223. Glu293 is a catalytic residue.

It belongs to the MurB family. Requires FAD as cofactor.

It is found in the cytoplasm. The catalysed reaction is UDP-N-acetyl-alpha-D-muramate + NADP(+) = UDP-N-acetyl-3-O-(1-carboxyvinyl)-alpha-D-glucosamine + NADPH + H(+). Its pathway is cell wall biogenesis; peptidoglycan biosynthesis. Its function is as follows. Cell wall formation. The sequence is that of UDP-N-acetylenolpyruvoylglucosamine reductase from Geobacter metallireducens (strain ATCC 53774 / DSM 7210 / GS-15).